A 535-amino-acid chain; its full sequence is Large neutral amino acids transporter small subunit 2 (535 aa).

Residues 1 to 10 (MEKGARHRHN) are compositionally biased toward basic residues. The interval 1–30 (MEKGARHRHNTDKNHAGGSESEDFPEASSG) is disordered. Over 1-44 (MEKGARHRHNTDKNHAGGSESEDFPEASSGGGGVALKKEIGLVS) the chain is Cytoplasmic. A phosphoserine mark is found at Ser-19, Ser-28, and Ser-29. A helical transmembrane segment spans residues 45 to 65 (ACGIIVGNIIGSGIFVSPKGV). Ile-53 is an L-leucine binding site. The Extracellular segment spans residues 66-73 (LENAGSVG). Residues 74–95 (LAVIVWIVTGLITAVGALCYAE) traverse the membrane as a helical segment. The Cytoplasmic portion of the chain corresponds to 96-116 (LGVTIPKSGGDYSYVKDIFGG). A helical transmembrane segment spans residues 117 to 149 (LAGFLRLWIAVLVIYPTNQAVIALTFSNYVLQP). Residue Asn-134 participates in L-tryptophan binding. Residues 150 to 157 (LFPTCFPP) lie on the Extracellular side of the membrane. A helical membrane pass occupies residues 158 to 178 (DSGLRLLAAICLLLLTWVNCS). Topologically, residues 179 to 181 (SVR) are cytoplasmic. Residues 182-210 (WATRVQDIFTAGKLLALALIIIMGVVQIC) traverse the membrane as a helical segment. Residues 211-230 (KGEYFWLEPKNAFDNFQEPD) lie on the Extracellular side of the membrane. The chain crosses the membrane as a helical span at residues 231–252 (IGLIALAFLQGSFAYGGWNFLN). An L-leucine-binding site is contributed by Gly-246. Residues 253-265 (YVTEELVDPYKNL) lie on the Cytoplasmic side of the membrane. The chain crosses the membrane as a helical span at residues 266 to 287 (PRAIFISIPLVTFVYVFANVAY). Topologically, residues 288–312 (ITAMSPQELLASNAVAVTFGEKLLG) are extracellular. Residues 313–338 (VMAWIMPISVALSTFGGVNGSLFTSS) traverse the membrane as a helical segment. Topologically, residues 339-364 (RLFFAGAREGHLPSVLAMIHVKRCTP) are cytoplasmic. The helical transmembrane segment at 365–382 (IPALLFTCLSTLLMLVTS) threads the bilayer. Residues 383 to 386 (DMYT) lie on the Extracellular side of the membrane. A helical membrane pass occupies residues 387–408 (LINYVGFINYLFYGVTVAGQIV). Position 395 (Asn-395) interacts with L-tryptophan. Topologically, residues 409–423 (LRWKKPDIPRPIKIN) are cytoplasmic. 2 consecutive transmembrane segments (helical) span residues 424–446 (LLFP…WSEP) and 447–466 (VVCG…YFLG). Residues 467–535 (VYWQHKPKCF…DKDSLEQSQP (69 aa)) lie on the Cytoplasmic side of the membrane. Positions 500-535 (GGSGTEGTREDMEEQQQPICQPSPGKDKDSLEQSQP) are disordered. Positions 524–535 (GKDKDSLEQSQP) are enriched in basic and acidic residues. Ser-529 is subject to Phosphoserine.

It belongs to the amino acid-polyamine-organocation (APC) superfamily. L-type amino acid transporter (LAT) (TC 2.A.3.8) family. As to quaternary structure, disulfide-linked heterodimer composed of the catalytic light chain subunit SLC7A8 and the heavy chain subunit SLC3A2. SLC3A2 acts as a chaperone for correct plasma membrane trafficking and stabilization of SLC7A8 and modulates the substrate affinity and specificity of SLC7A8. ICAM-1 associates with the heterodimer SLC3A2/SLC7A8; facilitates leucine uptake. In terms of tissue distribution, mainly expressed in kidney and small intestine.

Its subcellular location is the cell membrane. It is found in the basolateral cell membrane. The enzyme catalyses L-histidine(in) + L-phenylalanine(out) = L-histidine(out) + L-phenylalanine(in). It carries out the reaction L-tryptophan(in) + L-phenylalanine(out) = L-tryptophan(out) + L-phenylalanine(in). The catalysed reaction is L-isoleucine(in) + L-phenylalanine(out) = L-isoleucine(out) + L-phenylalanine(in). It catalyses the reaction L-valine(in) + L-phenylalanine(out) = L-valine(out) + L-phenylalanine(in). The enzyme catalyses L-leucine(in) + L-phenylalanine(out) = L-leucine(out) + L-phenylalanine(in). It carries out the reaction L-glutamine(in) + L-phenylalanine(out) = L-glutamine(out) + L-phenylalanine(in). The catalysed reaction is L-cysteine(in) + L-phenylalanine(out) = L-cysteine(out) + L-phenylalanine(in). It catalyses the reaction L-phenylalanine(out) + L-methionine(in) = L-phenylalanine(in) + L-methionine(out). The enzyme catalyses L-leucine(out) + L-methionine(in) = L-leucine(in) + L-methionine(out). It carries out the reaction L-cysteine(out) + L-methionine(in) = L-cysteine(in) + L-methionine(out). The catalysed reaction is S-methylmercury-L-cysteine(out) + L-methionine(in) = S-methylmercury-L-cysteine(in) + L-methionine(out). It catalyses the reaction S-methylmercury-L-cysteine(in) + L-leucine(out) = S-methylmercury-L-cysteine(out) + L-leucine(in). The enzyme catalyses S-methylmercury-L-cysteine(in) + L-phenylalanine(out) = S-methylmercury-L-cysteine(out) + L-phenylalanine(in). It carries out the reaction L-phenylalanine(out) + L-serine(in) = L-phenylalanine(in) + L-serine(out). The catalysed reaction is L-phenylalanine(out) + glycine(in) = L-phenylalanine(in) + glycine(out). It catalyses the reaction L-phenylalanine(out) + L-alanine(in) = L-phenylalanine(in) + L-alanine(out). The enzyme catalyses 3,3',5-triiodo-L-thyronine(out) = 3,3',5-triiodo-L-thyronine(in). It carries out the reaction 3,3'-diiodo-L-thyronine(out) = 3,3'-diiodo-L-thyronine(in). The catalysed reaction is L-dopa(out) + L-phenylalanine(in) = L-dopa(in) + L-phenylalanine(out). Its activity is regulated as follows. The transporter activity is inhibited by 2-aminobicyclo-(2,2,1)heptane-2-carboxylic acid (BCH) (a specific inhibitor of system L transport). Functionally, associates with SLC3A2 to form a functional heterodimeric complex that translocates small and large neutral amino acids with broad specificity and a stoichiometry of 1:1. Functions as amino acid antiporter mediating the influx of extracellular essential amino acids mainly in exchange with the efflux of highly concentrated intracellular amino acids. Has relatively symmetrical selectivities but strongly asymmetrical substrate affinities at both the intracellular and extracellular sides of the transporter. This asymmetry allows SLC7A8 to regulate intracellular amino acid pools (mM concentrations) by exchange with external amino acids (uM concentration range), equilibrating the relative concentrations of different amino acids across the plasma membrane instead of mediating their net uptake. May play an essential role in the reabsorption of neutral amino acids from the epithelial cells to the bloodstream in the kidney. Involved in the uptake of methylmercury (MeHg) when administered as the L-cysteine or D,L-homocysteine complexes, and hence plays a role in metal ion homeostasis and toxicity. Involved in the cellular activity of small molecular weight nitrosothiols, via the stereoselective transport of L-nitrosocysteine (L-CNSO) across the transmembrane. Imports the thyroid hormone diiodothyronine (T2) and to a smaller extent triiodothyronine (T3) but not rT 3 or thyroxine (T4). Mediates the uptake of L-DOPA. May participate in auditory function. In Oryctolagus cuniculus (Rabbit), this protein is Large neutral amino acids transporter small subunit 2.